Here is a 272-residue protein sequence, read N- to C-terminus: Bis(5'-nucleosyl)-tetraphosphatase, symmetrical (272 aa).

This sequence belongs to the Ap4A hydrolase family.

It catalyses the reaction P(1),P(4)-bis(5'-adenosyl) tetraphosphate + H2O = 2 ADP + 2 H(+). Its function is as follows. Hydrolyzes diadenosine 5',5'''-P1,P4-tetraphosphate to yield ADP. This Glaesserella parasuis serovar 5 (strain SH0165) (Haemophilus parasuis) protein is Bis(5'-nucleosyl)-tetraphosphatase, symmetrical.